Consider the following 321-residue polypeptide: Genome polyprotein (321 aa).

Residues 1–52 (RNLGKVIDTLTCGFADLMGYIPLVGAPLGGAARALAHGVRVLEDGVNYATGN) lie on the Cytoplasmic side of the membrane. Residues 6–57 (VIDTLTCGFADLMGYIPLVGAPLGGAARALAHGVRVLEDGVNYATGNLPGCS) are interaction with APOA2. Positions 48–51 (YATG) are important for lipid droplets localization. A helical membrane pass occupies residues 53–73 (LPGCSFSLFLLALLSCLTVPA). A propeptide spans 62–75 (LLALLSCLTVPASA) (ER anchor for the core protein, removed in mature form by host signal peptidase). Residues 74–242 (SAYQVRNSTG…AGAHWGVLAG (169 aa)) lie on the Lumenal side of the membrane. N-linked (GlcNAc...) asparagine; by host glycosylation is found at Asn80, Asn93, and Asn118. The important for fusion stretch occupies residues 149–180 (LVGSATLCSALYVGDLCGSIFLVGQLFTFSPR). A glycan (N-linked (GlcNAc...) asparagine; by host) is linked at Asn189. The helical transmembrane segment at 243–263 (IAYFSMVGNWAKVLVVLLLFA) threads the bilayer. Residues 264 to 321 (GVDAETTVTGGSAAHGALGIASLFNQGARQNIQLINTNGSWHINSTALNCNDSLNTGW) are Lumenal-facing. Residues 268–294 (ETTVTGGSAAHGALGIASLFNQGARQN) form an HVR1 region. N-linked (GlcNAc...) (high mannose) asparagine; by host glycans are attached at residues Asn301, Asn307, and Asn314.

Belongs to the hepacivirus polyprotein family. As to quaternary structure, homooligomer. Interacts with E1 (via C-terminus). Interacts with the non-structural protein 5A. Interacts (via N-terminus) with host STAT1 (via SH2 domain); this interaction results in decreased STAT1 phosphorylation and ubiquitin-mediated proteasome-dependent STAT1 degradation, leading to decreased IFN-stimulated gene transcription. Interacts with host STAT3; this interaction constitutively activates STAT3. Interacts with host LTBR receptor. Interacts with host TNFRSF1A receptor and possibly induces apoptosis. Interacts with host HNRPK. Interacts with host YWHAE. Interacts with host UBE3A/E6AP. Interacts with host DDX3X. Interacts with host APOA2. Interacts with host RXRA protein. Interacts with host SP110 isoform 3/Sp110b; this interaction sequesters the transcriptional corepressor SP110 away from the nucleus. Interacts with host CREB3 nuclear transcription protein; this interaction triggers cell transformation. Interacts with host ACY3. Interacts with host C1QR1. Interacts with host RBM24; this interaction, which enhances the interaction of the mature core protein with 5'-UTR, may inhibit viral translation and favor replication. Interacts with host EIF2AK2/PKR; this interaction induces the autophosphorylation of EIF2AK2. Part of the viral assembly initiation complex composed of NS2, E1, E2, NS3, NS4A, NS5A and the mature core protein. In terms of assembly, forms a heterodimer with envelope glycoprotein E2. Interacts with mature core protein. Interacts with protease NS2. The heterodimer E1/E2 interacts with host CLDN1; this interaction plays a role in viral entry into host cell. Interacts with host SPSB2 (via C-terminus). Part of the viral assembly initiation complex composed of NS2, E1, E2, NS3, NS4A, NS5A and the mature core protein. Forms a heterodimer with envelope glycoprotein E1. Interacts with host CD81 and SCARB1 receptors; these interactions play a role in viral entry into host cell. Interacts with host EIF2AK2/PKR; this interaction inhibits EIF2AK2 and probably allows the virus to evade the innate immune response. Interacts with host CD209/DC-SIGN and CLEC4M/DC-SIGNR. Interact with host SPCS1; this interaction is essential for viral particle assembly. Interacts with protease NS2. The heterodimer E1/E2 interacts with host CLDN1; this interaction plays a role in viral entry into host cell. Part of the viral assembly initiation complex composed of NS2, E1, E2, NS3, NS4A, NS5A and the mature core protein. Post-translationally, specific enzymatic cleavages in vivo yield mature proteins. The structural proteins, core, E1, E2 and p7 are produced by proteolytic processing by host signal peptidases. The core protein precursor is synthesized as a 23 kDa, which is retained in the ER membrane through the hydrophobic signal peptide. Cleavage by the signal peptidase releases the 21 kDa mature core protein. The cleavage of the core protein precursor occurs between aminoacids 176 and 188 but the exact cleavage site is not known. Some degraded forms of the core protein appear as well during the course of infection. The other proteins (p7, NS2, NS3, NS4A, NS4B, NS5A and NS5B) are cleaved by the viral proteases. Autoprocessing between NS2 and NS3 is mediated by the NS2 cysteine protease catalytic domain and regulated by the NS3 N-terminal domain. Phosphorylated by host PKC and PKA. In terms of processing, ubiquitinated; mediated by UBE3A and leading to core protein subsequent proteasomal degradation. Post-translationally, highly N-glycosylated.

It is found in the host endoplasmic reticulum membrane. It localises to the host mitochondrion membrane. The protein localises to the virion. Its subcellular location is the host cytoplasm. The protein resides in the host nucleus. It is found in the host lipid droplet. It localises to the virion membrane. Packages viral RNA to form a viral nucleocapsid, and promotes virion budding. Participates in the viral particle production as a result of its interaction with the non-structural protein 5A. Binds RNA and may function as a RNA chaperone to induce the RNA structural rearrangements taking place during virus replication. Modulates viral translation initiation by interacting with viral IRES and 40S ribosomal subunit. Affects various cell signaling pathways, host immunity and lipid metabolism. Prevents the establishment of cellular antiviral state by blocking the interferon-alpha/beta (IFN-alpha/beta) and IFN-gamma signaling pathways and by blocking the formation of phosphorylated STAT1 and promoting ubiquitin-mediated proteasome-dependent degradation of STAT1. Activates STAT3 leading to cellular transformation. Regulates the activity of cellular genes, including c-myc and c-fos. May repress the promoter of p53, and sequester CREB3 and SP110 isoform 3/Sp110b in the cytoplasm. Represses cell cycle negative regulating factor CDKN1A, thereby interrupting an important check point of normal cell cycle regulation. Targets transcription factors involved in the regulation of inflammatory responses and in the immune response: suppresses TNF-induced NF-kappa-B activation, and activates AP-1. Binds to dendritic cells (DCs) via C1QR1, resulting in down-regulation of T-lymphocytes proliferation. Alters lipid metabolism by interacting with hepatocellular proteins involved in lipid accumulation and storage. Induces up-regulation of FAS promoter activity, and thereby contributes to the increased triglyceride accumulation in hepatocytes (steatosis). Its function is as follows. Forms a heterodimer with envelope glycoprotein E2, which mediates virus attachment to the host cell, virion internalization through clathrin-dependent endocytosis and fusion with host membrane. Fusion with the host cell is most likely mediated by both E1 and E2, through conformational rearrangements of the heterodimer required for fusion rather than a classical class II fusion mechanism. E1/E2 heterodimer binds host apolipoproteins such as APOB and ApoE thereby forming a lipo-viro-particle (LVP). APOE associated to the LVP allows the initial virus attachment to cell surface receptors such as the heparan sulfate proteoglycans (HSPGs), syndecan-1 (SDC1), syndecan-1 (SDC2), the low-density lipoprotein receptor (LDLR) and scavenger receptor class B type I (SCARB1). The cholesterol transfer activity of SCARB1 allows E2 exposure and binding of E2 to SCARB1 and the tetraspanin CD81. E1/E2 heterodimer binding on CD81 activates the epithelial growth factor receptor (EGFR) signaling pathway. Diffusion of the complex E1-E2-EGFR-SCARB1-CD81 to the cell lateral membrane allows further interaction with Claudin 1 (CLDN1) and occludin (OCLN) to finally trigger HCV entry. Functionally, forms a heterodimer with envelope glycoprotein E1, which mediates virus attachment to the host cell, virion internalization through clathrin-dependent endocytosis and fusion with host membrane. Fusion with the host cell is most likely mediated by both E1 and E2, through conformational rearrangements of the heterodimer required for fusion rather than a classical class II fusion mechanism. The interaction between envelope glycoprotein E2 and host apolipoprotein E/APOE allows the proper assembly, maturation and infectivity of the viral particles. This interaction is probably promoted via the up-regulation of cellular autophagy by the virus. E1/E2 heterodimer binds host apolipoproteins such as APOB and APOE thereby forming a lipo-viro-particle (LVP). APOE associated to the LVP allows the initial virus attachment to cell surface receptors such as the heparan sulfate proteoglycans (HSPGs), syndecan-1 (SDC1), syndecan-1 (SDC2), the low-density lipoprotein receptor (LDLR) and scavenger receptor class B type I (SCARB1). The cholesterol transfer activity of SCARB1 allows E2 exposure and binding of E2 to SCARB1 and the tetraspanin CD81. E1/E2 heterodimer binding on CD81 activates the epithelial growth factor receptor (EGFR) signaling pathway. Diffusion of the complex E1-E2-EGFR-SCARB1-CD81 to the cell lateral membrane allows further interaction with Claudin 1 (CLDN1) and occludin (OCLN) to finally trigger HCV entry. Inhibits host EIF2AK2/PKR activation, preventing the establishment of an antiviral state. Viral ligand for CD209/DC-SIGN and CLEC4M/DC-SIGNR, which are respectively found on dendritic cells (DCs), and on liver sinusoidal endothelial cells and macrophage-like cells of lymph node sinuses. These interactions allow the capture of circulating HCV particles by these cells and subsequent facilitated transmission to permissive cells such as hepatocytes and lymphocyte subpopulations. The sequence is that of Genome polyprotein from Homo sapiens (Human).